Reading from the N-terminus, the 230-residue chain is Orotidine 5'-phosphate decarboxylase (230 aa).

Substrate is bound by residues aspartate 11, lysine 34, 61–70, threonine 117, arginine 179, glutamine 188, glycine 208, and arginine 209; that span reads DLKLHDIPNT. The active-site Proton donor is the lysine 63.

It belongs to the OMP decarboxylase family. Type 1 subfamily. In terms of assembly, homodimer.

The catalysed reaction is orotidine 5'-phosphate + H(+) = UMP + CO2. It functions in the pathway pyrimidine metabolism; UMP biosynthesis via de novo pathway; UMP from orotate: step 2/2. Its function is as follows. Catalyzes the decarboxylation of orotidine 5'-monophosphate (OMP) to uridine 5'-monophosphate (UMP). The protein is Orotidine 5'-phosphate decarboxylase of Streptococcus pyogenes serotype M6 (strain ATCC BAA-946 / MGAS10394).